The following is a 105-amino-acid chain: Heat shock protein HspQ (105 aa).

This sequence belongs to the HspQ family.

It is found in the cytoplasm. In terms of biological role, involved in the degradation of certain denaturated proteins, including DnaA, during heat shock stress. The sequence is that of Heat shock protein HspQ from Blochmanniella pennsylvanica (strain BPEN).